Here is a 478-residue protein sequence, read N- to C-terminus: Noelin-3 (478 aa).

Residues 1 to 23 form the signal peptide; sequence MSAPLLKLGAVLSTMAMISNWMS. N-linked (GlcNAc...) asparagine glycosylation is found at N33, N95, N179, N299, and N465. Positions 77–217 form a coiled coil; that stretch reads CSRDAKSRQL…TRLRDCMKKL (141 aa). One can recognise an Olfactomedin-like domain in the interval 218–470; that stretch reads TCGKLMKITG…QVLFNVTLFH (253 aa). C219 and C401 are joined by a disulfide.

Peripherally associated with AMPAR complex. AMPAR complex consists of an inner core made of 4 pore-forming GluA/GRIA proteins (GRIA1, GRIA2, GRIA3 and GRIA4) and 4 major auxiliary subunits arranged in a twofold symmetry. One of the two pairs of distinct binding sites is occupied either by CNIH2, CNIH3 or CACNG2, CACNG3. The other harbors CACNG2, CACNG3, CACNG4, CACNG8 or GSG1L. This inner core of AMPAR complex is complemented by outer core constituents binding directly to the GluA/GRIA proteins at sites distinct from the interaction sites of the inner core constituents. Outer core constituents include at least PRRT1, PRRT2, CKAMP44/SHISA9, FRRS1L and NRN1. The proteins of the inner and outer core serve as a platform for other, more peripherally associated AMPAR constituents, including OLFM3. Alone or in combination, these auxiliary subunits control the gating and pharmacology of the AMPAR complex and profoundly impact their biogenesis and protein processing. Homodimer. Interacts with MYOC. Interacts with OLFM2. Expressed in the brain (at protein level). Also expressed in the retina, mainly in the ganglion cell layer and in the amacrine cell subregion of the inner nuclear layer. Expressed at high levels in the epithelial cells of the posterior iris and the ciliary body and, at lower levels, in the trabecular meshwork. Isoform 2 preferentially expressed in retina and brain, while isoform 1 preferentially expressed in the tissues of the eye angle.

Its subcellular location is the secreted. The protein resides in the synapse. The polypeptide is Noelin-3 (Olfm3) (Rattus norvegicus (Rat)).